A 538-amino-acid chain; its full sequence is MAVISKKIPAPDKVEIKTALLSVFDKTGIVELAQALSERGVRLLSTGGTYKAIAAAGLAVTDVSDITGFPEIMDGRVKTLHPTVHGGLLAIRDDNEHQEAMKKHGIEGIDLAVINLYPFEEVRAAGGDYPTTVENIDIGGPAMIRASAKNHAYVTILTDPNDYAEFKEQLSADAGKTAYAFRQRMAAKAYARTAAYDAAISNWFAEALSIDTPRHRVIGGVLKEEMRYGENPHQRAAFYVTGEKRPGVSTAVLLQGKQLSYNNINDTDAAYELVAEFLPERAPACAIIKHANPCGVATGSSLIEAYQRALACDSVSAFGGIIALNQILDAETAEEIVKLFTEVIIAPDVTEEAKAIVARKPNLRLLSAGGLPDPRVAGLTAKTVSGGLLVQSRDNGMVEDLELKVVTRRAPTGQELEDMKFAFKVGKHVKSNAVVYAKDGQTAGIGAGQMSRVDSARIAALKAEEAAKALGLAVPMTKGSAVASEAFLPFADGLLSMIAAGATAVIQPGGSMRDQEVIDAANEHGIAMVFTGMRHFRH.

Residues 8–158 form the MGS-like domain; sequence IPAPDKVEIK…KNHAYVTILT (151 aa).

This sequence belongs to the PurH family.

It carries out the reaction (6R)-10-formyltetrahydrofolate + 5-amino-1-(5-phospho-beta-D-ribosyl)imidazole-4-carboxamide = 5-formamido-1-(5-phospho-D-ribosyl)imidazole-4-carboxamide + (6S)-5,6,7,8-tetrahydrofolate. The catalysed reaction is IMP + H2O = 5-formamido-1-(5-phospho-D-ribosyl)imidazole-4-carboxamide. It participates in purine metabolism; IMP biosynthesis via de novo pathway; 5-formamido-1-(5-phospho-D-ribosyl)imidazole-4-carboxamide from 5-amino-1-(5-phospho-D-ribosyl)imidazole-4-carboxamide (10-formyl THF route): step 1/1. Its pathway is purine metabolism; IMP biosynthesis via de novo pathway; IMP from 5-formamido-1-(5-phospho-D-ribosyl)imidazole-4-carboxamide: step 1/1. The polypeptide is Bifunctional purine biosynthesis protein PurH (Rhizobium etli (strain ATCC 51251 / DSM 11541 / JCM 21823 / NBRC 15573 / CFN 42)).